Here is a 360-residue protein sequence, read N- to C-terminus: Peptide chain release factor 1 (360 aa).

An N5-methylglutamine modification is found at glutamine 235. Residues 283–308 (MQKRQQAEASERRNLLGSGDRSDRNR) show a composition bias toward basic and acidic residues. The interval 283 to 313 (MQKRQQAEASERRNLLGSGDRSDRNRTYNFP) is disordered.

This sequence belongs to the prokaryotic/mitochondrial release factor family. In terms of processing, methylated by PrmC. Methylation increases the termination efficiency of RF1.

Its subcellular location is the cytoplasm. Its function is as follows. Peptide chain release factor 1 directs the termination of translation in response to the peptide chain termination codons UAG and UAA. In Yersinia enterocolitica serotype O:8 / biotype 1B (strain NCTC 13174 / 8081), this protein is Peptide chain release factor 1.